We begin with the raw amino-acid sequence, 257 residues long: Probable amino-acid ABC transporter-binding protein HI_1080 (257 aa).

The N-terminal stretch at 1–23 (MKKLLFTTALLTGAIAFSTFSHA) is a signal peptide.

The protein belongs to the bacterial solute-binding protein 3 family.

It localises to the periplasm. Its function is as follows. Probably part of a binding-protein-dependent transport system for an amino acid. The protein is Probable amino-acid ABC transporter-binding protein HI_1080 of Haemophilus influenzae (strain ATCC 51907 / DSM 11121 / KW20 / Rd).